Reading from the N-terminus, the 271-residue chain is Pyrroline-5-carboxylate reductase (271 aa).

It belongs to the pyrroline-5-carboxylate reductase family.

The protein resides in the cytoplasm. The catalysed reaction is L-proline + NADP(+) = (S)-1-pyrroline-5-carboxylate + NADPH + 2 H(+). It carries out the reaction L-proline + NAD(+) = (S)-1-pyrroline-5-carboxylate + NADH + 2 H(+). It functions in the pathway amino-acid biosynthesis; L-proline biosynthesis; L-proline from L-glutamate 5-semialdehyde: step 1/1. Functionally, catalyzes the reduction of 1-pyrroline-5-carboxylate (PCA) to L-proline. The polypeptide is Pyrroline-5-carboxylate reductase (Haemophilus influenzae (strain ATCC 51907 / DSM 11121 / KW20 / Rd)).